The chain runs to 31 residues: PVAPEYLFKKEEDKGANKEEEEVAPELGIRA.

The tract at residues 1-31 is disordered; sequence PVAPEYLFKKEEDKGANKEEEEVAPELGIRA. A compositionally biased stretch (basic and acidic residues) spans 7 to 18; the sequence is LFKKEEDKGANK.

This sequence belongs to the aspartate/glutamate racemases family. It depends on pyridoxal 5'-phosphate as a cofactor.

The catalysed reaction is L-aspartate = D-aspartate. Inhibited by hydroxylamine, aminooxyacetate, phenylhydrazine and sodium borohydride. In terms of biological role, highly specific toward aspartate and entirely inactive on glutamate, alanine and serine. In Anadara broughtonii (Blood clam), this protein is Aspartate racemase.